Reading from the N-terminus, the 184-residue chain is Photosystem I assembly protein Ycf4 (184 aa).

2 helical membrane-spanning segments follow: residues Phe-22–Ser-42 and Ile-57–Ser-77.

The protein belongs to the Ycf4 family.

It localises to the plastid. The protein resides in the chloroplast thylakoid membrane. In terms of biological role, seems to be required for the assembly of the photosystem I complex. The protein is Photosystem I assembly protein Ycf4 of Phalaenopsis aphrodite subsp. formosana (Moth orchid).